The chain runs to 369 residues: Peptide chain release factor 2 (369 aa).

Position 251 is an N5-methylglutamine (Q251).

Belongs to the prokaryotic/mitochondrial release factor family. Methylated by PrmC. Methylation increases the termination efficiency of RF2.

Its subcellular location is the cytoplasm. In terms of biological role, peptide chain release factor 2 directs the termination of translation in response to the peptide chain termination codons UGA and UAA. This is Peptide chain release factor 2 (prfB) from Thermotoga maritima (strain ATCC 43589 / DSM 3109 / JCM 10099 / NBRC 100826 / MSB8).